Reading from the N-terminus, the 838-residue chain is Probable glucan 1,3-beta-glucosidase D (838 aa).

Positions 1–23 (MPSHSRSRDRYRGRDESEPERDR) are enriched in basic and acidic residues. A disordered region spans residues 1 to 298 (MPSHSRSRDR…GASDSDMDGA (298 aa)). Topologically, residues 1-310 (MPSHSRSRDR…GTPFWKKKKT (310 aa)) are cytoplasmic. A compositionally biased stretch (acidic residues) spans 35–45 (DYEDDELDDDD). Basic and acidic residues-rich tracts occupy residues 111 to 124 (DSPRRRDRHRDGDR), 149 to 164 (SRDDRRERAYESEREA), 200 to 221 (AKLRSEYDKEDRSRAKADAKAE), and 234 to 246 (QPRRLDPFPEETP). Residues 311–331 (WIAVGVVVVLLAIIIPVAVVV) form a helical; Signal-anchor for type II membrane protein membrane-spanning segment. Residues 332–838 (SKKNNEKKSD…PDFGDLPENY (507 aa)) are Extracellular-facing. The interval 335–359 (NNEKKSDSTTDDTTPRNSNLDGISR) is disordered. Residues asparagine 383, asparagine 388, asparagine 400, asparagine 553, and asparagine 565 are each glycosylated (N-linked (GlcNAc...) asparagine). Glutamate 604 serves as the catalytic Proton donor. N-linked (GlcNAc...) asparagine glycans are attached at residues asparagine 643 and asparagine 696. Glutamate 709 serves as the catalytic Nucleophile.

This sequence belongs to the glycosyl hydrolase 5 (cellulase A) family.

Its subcellular location is the cell membrane. It catalyses the reaction Successive hydrolysis of beta-D-glucose units from the non-reducing ends of (1-&gt;3)-beta-D-glucans, releasing alpha-glucose.. Glucosidase involved in the degradation of cellulosic biomass. Active on lichenan. The polypeptide is Probable glucan 1,3-beta-glucosidase D (exgD) (Aspergillus terreus (strain NIH 2624 / FGSC A1156)).